Reading from the N-terminus, the 155-residue chain is Ribonuclease 8 (155 aa).

Residues M1 to A28 form the signal peptide. Cystine bridges form between C65-C119, C83-C134, and C90-C97. Substrate-binding positions include K66–T70 and K91. Residue H150 is the Proton donor of the active site.

The protein belongs to the pancreatic ribonuclease family.

The protein resides in the secreted. Has a low ribonuclease activity. The polypeptide is Ribonuclease 8 (RNASE8) (Saguinus oedipus (Cotton-top tamarin)).